The sequence spans 607 residues: Chaperone protein DnaK (607 aa).

Position 174 is a phosphothreonine; by autocatalysis (T174). A disordered region spans residues 577 to 607; that stretch reads GYTASGPQGGPNPGGGQSGPDGNVNTDYKVY. Positions 583–595 are enriched in gly residues; sequence PQGGPNPGGGQSG.

It belongs to the heat shock protein 70 family.

Its function is as follows. Acts as a chaperone. The sequence is that of Chaperone protein DnaK from Caldicellulosiruptor bescii (strain ATCC BAA-1888 / DSM 6725 / KCTC 15123 / Z-1320) (Anaerocellum thermophilum).